The primary structure comprises 548 residues: Adenine deaminase (548 aa).

This sequence belongs to the metallo-dependent hydrolases superfamily. Adenine deaminase family. The cofactor is Mn(2+).

The catalysed reaction is adenine + H2O + H(+) = hypoxanthine + NH4(+). This Borreliella afzelii (strain PKo) (Borrelia afzelii) protein is Adenine deaminase.